The primary structure comprises 609 residues: Probable ubiquitin-conjugating enzyme E2 25 (609 aa).

Disordered regions lie at residues 70–99 (EEDEYAVGSPGDDYGYPESSPLSNSLLDPE) and 151–185 (ADKESASSSKSSHANNGNNSSKKATKASGIHSQFS). Over residues 156 to 178 (ASSSKSSHANNGNNSSKKATKAS) the composition is skewed to low complexity. A UBC core domain is found at 332–492 (DWAKRIQDEW…TFILSLKTMV (161 aa)). Residue cysteine 418 is the Glycyl thioester intermediate of the active site.

It belongs to the ubiquitin-conjugating enzyme family. Expressed in seeds, pistils, siliques, hypocotyls and leaves.

The catalysed reaction is S-ubiquitinyl-[E1 ubiquitin-activating enzyme]-L-cysteine + [E2 ubiquitin-conjugating enzyme]-L-cysteine = [E1 ubiquitin-activating enzyme]-L-cysteine + S-ubiquitinyl-[E2 ubiquitin-conjugating enzyme]-L-cysteine.. It functions in the pathway protein modification; protein ubiquitination. Its function is as follows. Accepts the ubiquitin from the E1 complex and catalyzes its covalent attachment to other proteins. This chain is Probable ubiquitin-conjugating enzyme E2 25 (UBC25), found in Arabidopsis thaliana (Mouse-ear cress).